A 605-amino-acid chain; its full sequence is Solute carrier family 23 member 1 (605 aa).

Residues 1-30 (MKTPEDPGSPKQHEVVDSAGTSTRDRQAPL) are disordered. Residues 1-59 (MKTPEDPGSPKQHEVVDSAGTSTRDRQAPLPTEPKFDMLYKIEDVPPWYLCILLGFQHY) lie on the Cytoplasmic side of the membrane. A helical membrane pass occupies residues 60–80 (LTCFSGTIAVPFLLAEALCVG). The Extracellular segment spans residues 81-88 (RDQHMVSQ). Residues 89–109 (LIGTIFTCVGITTLIQTTVGI) traverse the membrane as a helical segment. Residue R110 is a topological domain, cytoplasmic. Residues 111–131 (LPLFQASAFAFLVPAKSILAL) form a helical membrane-spanning segment. The Extracellular segment spans residues 132–166 (ERWKCPSEEEIYGNWSMPLNTSHIWHPRIREVQGA). Residues N145 and N151 are each glycosylated (N-linked (GlcNAc...) asparagine). The chain crosses the membrane as a helical span at residues 167–187 (IMVSSMVEVVIGLMGLPGALL). At 188–214 (SYIGPLTVTPTVSLIGLSVFQAAGDRA) the chain is on the cytoplasmic side. Residues 215–232 (GSHWGISACSILLIVLFS) form a helical membrane-spanning segment. Residues 233-236 (QYLR) lie on the Extracellular side of the membrane. Positions 237-250 (NLTFLLPVYRWGKG) form an intramembrane region, helical. The Extracellular portion of the chain corresponds to 251-257 (LTLFRVQ). The chain crosses the membrane as a helical span at residues 258-278 (IFKMFPIVLAIMTVWLLCYVL). At 279–319 (TLTDVLPADPTVYGFQARTDARGDIMAISPWIRIPYPCQWG) the chain is on the cytoplasmic side. The chain crosses the membrane as a helical span at residues 320 to 340 (LPTVTVAAVLGMFSATLAGII). The Extracellular segment spans residues 341–365 (ESIGDYYACARLAGAPPPPVHAINR). A helical transmembrane segment spans residues 366-386 (GIFTEGICCIIAGLLGTGNGS). Residues 387–409 (TSSSPNIGVLGITKVGSRRVVQY) lie on the Cytoplasmic side of the membrane. A helical membrane pass occupies residues 410-430 (GAGIMLILGAIGKFTALFASL). The Extracellular portion of the chain corresponds to 431 to 433 (PDP). A helical membrane pass occupies residues 434 to 454 (ILGGMFCTLFGMITAVGLSNL). Over 455 to 464 (QFVDMNSSRN) the chain is Cytoplasmic. Residues 465-485 (LFVLGFSMFFGLTLPNYLDSN) traverse the membrane as a helical segment. Residues 486–497 (PGAINTGIPEVD) are Extracellular-facing. A helical transmembrane segment spans residues 498–518 (QILTVLLTTEMFVGGCLAFIL). Residues 519–605 (DNTVPGSPEE…IETGSVCTKV (87 aa)) are Cytoplasmic-facing. T598 bears the Phosphothreonine mark. S600 bears the Phosphoserine mark. T603 is subject to Phosphothreonine.

It belongs to the nucleobase:cation symporter-2 (NCS2) (TC 2.A.40) family. Post-translationally, phosphorylated. In terms of tissue distribution, expressed in kidney (at protein level).

Its subcellular location is the cell membrane. The catalysed reaction is L-ascorbate(out) + 2 Na(+)(out) = L-ascorbate(in) + 2 Na(+)(in). The enzyme catalyses urate(out) + 2 Na(+)(out) = urate(in) + 2 Na(+)(in). Sodium:L-ascorbate cotransporter. Mediates electrogenic uptake of vitamin C, with a stoichiometry of 2 Na(+) for each L-ascorbate. Has retained some ancestral activity toward nucleobases such as urate, an oxidized purine. Low-affinity high-capacity sodium:urate cotransporter, may regulate serum urate levels by serving as a renal urate re-absorber. The sequence is that of Solute carrier family 23 member 1 (Slc23a1) from Mus musculus (Mouse).